Consider the following 155-residue polypeptide: DNA gyrase inhibitor (155 aa).

It belongs to the DNA gyrase inhibitor family. As to quaternary structure, interacts with DNA gyrase.

The protein resides in the cytoplasm. Inhibits the supercoiling activity of DNA gyrase. Acts by inhibiting DNA gyrase at an early step, prior to (or at the step of) binding of DNA by the gyrase. It protects cells against toxins that target DNA gyrase, by inhibiting activity of these toxins and reducing the formation of lethal double-strand breaks in the cell. This Edwardsiella ictaluri (strain 93-146) protein is DNA gyrase inhibitor.